The sequence spans 483 residues: MRILFASSEVHPLIKTGGLADVSASLPQALKRLRQDVRVVMPAYGSVLDKAGDLEQVTTLQLPGFPGDTVTLLSGTLPGSRVPLWLVDAPRLFRRAGDPYRAPDGHDWQDNYLRFGLFARLIEHLALDRAGLDWRPDVVHCNDWQAGLAPLMLSMHESRPATVFTIHNLAYQGLFPRHAFDALNLPPQLWHYQGLEFHGKLSFIKGGIGFADHITTVSPSYAREILTPQQGFGLDGLLNHRAGVLTGILNGVDYREWDPGKDRHLVARYSADDLSGKARCKAALQHHFKLPCHSGIPLLGHVGRMVAQKGVDLLLKAAEPLLAAGEAQLVVVGSGDATLEQTARSLAERYPEHMGLHIGYSEPLAHQLEAGADIFVMPSRFEPCGLNQMYSLRYGTVPVVRNTGGLADTVVDADPAHLAARDATGIQFDEATPQALADALARALALYHDPACWKRLMQAGMAQDFSWGRSAEAYLDLYKDLVS.

Lys15 contacts ADP-alpha-D-glucose.

It belongs to the glycosyltransferase 1 family. Bacterial/plant glycogen synthase subfamily.

The catalysed reaction is [(1-&gt;4)-alpha-D-glucosyl](n) + ADP-alpha-D-glucose = [(1-&gt;4)-alpha-D-glucosyl](n+1) + ADP + H(+). The protein operates within glycan biosynthesis; glycogen biosynthesis. Functionally, synthesizes alpha-1,4-glucan chains using ADP-glucose. The sequence is that of Glycogen synthase from Thioalkalivibrio sulfidiphilus (strain HL-EbGR7).